A 177-amino-acid polypeptide reads, in one-letter code: TRAF-interacting protein with FHA domain-containing protein A (177 aa).

Positions 48–104 (VAFGRDYNVCRYPLLSNRVSRIQFNLQFFKHFNCSTTAIEIKNLSKKNKLYVDNLEL) constitute an FHA domain.

The protein belongs to the TIFA family. Interacts with traf6.

The protein localises to the cytoplasm. Adapter molecule that plays a key role in the activation of pro-inflammatory NF-kappa-B signaling following detection of bacterial pathogen-associated molecular pattern metabolites (PAMPs). Promotes activation of an innate immune response by inducing the oligomerization and polyubiquitination of TRAF6, which leads to the activation of TAK1 and IKK through a proteasome-independent mechanism. In Xenopus tropicalis (Western clawed frog), this protein is TRAF-interacting protein with FHA domain-containing protein A.